Reading from the N-terminus, the 420-residue chain is Probable endo-beta-1,4-glucanase celB (420 aa).

The N-terminal stretch at 1 to 18 (MLRKLTPLALALLPLVAG) is a signal peptide. N118 carries an N-linked (GlcNAc...) asparagine glycan. E215 serves as the catalytic Nucleophile. E220 (proton donor) is an active-site residue. N-linked (GlcNAc...) asparagine glycosylation is found at N234, N293, and N383.

This sequence belongs to the glycosyl hydrolase 7 (cellulase C) family.

It is found in the secreted. The enzyme catalyses Endohydrolysis of (1-&gt;4)-beta-D-glucosidic linkages in cellulose, lichenin and cereal beta-D-glucans.. Its function is as follows. Has endoglucanase activity on substrates containing beta-1,4 glycosidic bonds, like in carboxymethylcellulose (CMC), hydroxyethylcellulose (HEC) and beta-glucan. Involved in the degradation of complex natural cellulosic substrates. The protein is Probable endo-beta-1,4-glucanase celB (celB) of Aspergillus terreus (strain NIH 2624 / FGSC A1156).